The following is a 41-amino-acid chain: Trypsin inhibitor (41 aa).

Cystine bridges form between C15-C26, C17-C24, and C29-C37.

Functionally, has two active sites that simultaneously bind and inhibit trypsin. The chain is Trypsin inhibitor from Trichosanthes kirilowii (Chinese snake gourd).